The following is a 318-amino-acid chain: Transaldolase (318 aa).

Lysine 132 functions as the Schiff-base intermediate with substrate in the catalytic mechanism.

The protein belongs to the transaldolase family. Type 1 subfamily. In terms of assembly, homodimer.

Its subcellular location is the cytoplasm. The enzyme catalyses D-sedoheptulose 7-phosphate + D-glyceraldehyde 3-phosphate = D-erythrose 4-phosphate + beta-D-fructose 6-phosphate. The protein operates within carbohydrate degradation; pentose phosphate pathway; D-glyceraldehyde 3-phosphate and beta-D-fructose 6-phosphate from D-ribose 5-phosphate and D-xylulose 5-phosphate (non-oxidative stage): step 2/3. In terms of biological role, transaldolase is important for the balance of metabolites in the pentose-phosphate pathway. This Shewanella woodyi (strain ATCC 51908 / MS32) protein is Transaldolase.